The chain runs to 523 residues: GMP synthase [glutamine-hydrolyzing] (523 aa).

Residues 8 to 205 (KILILDFGSQ…VVNICGCTTN (198 aa)) enclose the Glutamine amidotransferase type-1 domain. The active-site Nucleophile is the C85. Residues H179 and E181 contribute to the active site. The GMPS ATP-PPase domain occupies 206 to 398 (WTPENIIEDA…LGLPAEMLNR (193 aa)). 233 to 239 (SGGVDSS) provides a ligand contact to ATP.

As to quaternary structure, homodimer.

The catalysed reaction is XMP + L-glutamine + ATP + H2O = GMP + L-glutamate + AMP + diphosphate + 2 H(+). Its pathway is purine metabolism; GMP biosynthesis; GMP from XMP (L-Gln route): step 1/1. Its function is as follows. Catalyzes the synthesis of GMP from XMP. The polypeptide is GMP synthase [glutamine-hydrolyzing] (Mannheimia succiniciproducens (strain KCTC 0769BP / MBEL55E)).